The sequence spans 512 residues: Ammonium transporter 2 (512 aa).

At 1 to 47 the chain is on the extracellular side; the sequence is MSSVNSIPTATSTVYISVLPATATPSGGSGGNVLHEDLNKFYDYGNT. A helical membrane pass occupies residues 48–68; sequence SWILACTPLCLIMVPGVAFFY. Residues 69 to 77 are Cytoplasmic-facing; the sequence is SGLARRKNT. The helical transmembrane segment at 78–98 threads the bilayer; the sequence is LALIMLSMLGLCVSFFQWYFW. The Extracellular segment spans residues 99–137; the sequence is GYSLAFSQTGTSGYIGNLRHFAFIRTLADYSPGSNNIPE. Residues 138-158 form a helical membrane-spanning segment; it reads LVFANFQGMFAAITVALFTGA. Topologically, residues 159 to 167 are cytoplasmic; the sequence is AAERGRIGP. A helical membrane pass occupies residues 168 to 188; it reads MLIITFVWLTVVYCPIACWIW. The Extracellular segment spans residues 189–201; it reads NPNGWAFKFGVYD. Residues 202–222 traverse the membrane as a helical segment; the sequence is FAGGGPVEVGSGFAALAYTVC. The Cytoplasmic segment spans residues 223-238; sequence LGRRSKFVEEQFRPHS. The chain crosses the membrane as a helical span at residues 239 to 259; that stretch reads VLNVVLGTSLLWFGWLGFNGG. At 260 to 267 the chain is on the extracellular side; that stretch reads SAYGSNLR. The helical transmembrane segment at 268-288 threads the bilayer; the sequence is AAMAITNTNLAGAVAGLVWVI. Residues 289 to 300 are Cytoplasmic-facing; the sequence is YDYIFRTRKWST. Residues 301-321 form a helical membrane-spanning segment; that stretch reads IGFCSGVVAGLVAATPCAGFV. A topological domain (extracellular) is located at residue S322. Residues 323 to 343 traverse the membrane as a helical segment; sequence PHASLAIGAITGLCCNWAIKL. The Cytoplasmic portion of the chain corresponds to 344–354; it reads KSHMRIDDAMD. A helical transmembrane segment spans residues 355–375; that stretch reads IFAIHGVAGFVGTFLNGLFAV. Residues 376–406 are Extracellular-facing; sequence DYIAAMDGIYVGENKIRGGWFDHHWRQLGLQ. Residues 407–427 form a helical membrane-spanning segment; the sequence is MAYICAVGAYDFVVTFIILFI. Residues 428–512 are Cytoplasmic-facing; sequence TDKIPYLQLR…TNPLELGLTI (85 aa).

Belongs to the ammonia transporter channel (TC 1.A.11.2) family.

Its subcellular location is the membrane. Its function is as follows. Transporter for ammonium to use as a nitrogen source. This chain is Ammonium transporter 2 (amt2), found in Schizosaccharomyces pombe (strain 972 / ATCC 24843) (Fission yeast).